The primary structure comprises 428 residues: Trigger factor (428 aa).

The PPIase FKBP-type domain occupies 163–248; that stretch reads GDMVIIDYKG…IHEIKEKEVP (86 aa).

This sequence belongs to the FKBP-type PPIase family. Tig subfamily.

It localises to the cytoplasm. It catalyses the reaction [protein]-peptidylproline (omega=180) = [protein]-peptidylproline (omega=0). Involved in protein export. Acts as a chaperone by maintaining the newly synthesized protein in an open conformation. Functions as a peptidyl-prolyl cis-trans isomerase. The polypeptide is Trigger factor (Alkaliphilus oremlandii (strain OhILAs) (Clostridium oremlandii (strain OhILAs))).